The sequence spans 305 residues: HPr kinase/phosphorylase (305 aa).

Catalysis depends on residues H138 and K159. G153–S160 is an ATP binding site. S160 serves as a coordination point for Mg(2+). D177 (proton acceptor; for phosphorylation activity. Proton donor; for dephosphorylation activity) is an active-site residue. Residues I201–D210 are important for the catalytic mechanism of both phosphorylation and dephosphorylation. E202 contributes to the Mg(2+) binding site. Residue R243 is part of the active site. The tract at residues P264–R269 is important for the catalytic mechanism of dephosphorylation.

This sequence belongs to the HPrK/P family. In terms of assembly, homohexamer. Mg(2+) is required as a cofactor.

It carries out the reaction [HPr protein]-L-serine + ATP = [HPr protein]-O-phospho-L-serine + ADP + H(+). The enzyme catalyses [HPr protein]-O-phospho-L-serine + phosphate + H(+) = [HPr protein]-L-serine + diphosphate. Catalyzes the ATP- as well as the pyrophosphate-dependent phosphorylation of a specific serine residue in HPr, a phosphocarrier protein of the phosphoenolpyruvate-dependent sugar phosphotransferase system (PTS). HprK/P also catalyzes the pyrophosphate-producing, inorganic phosphate-dependent dephosphorylation (phosphorolysis) of seryl-phosphorylated HPr (P-Ser-HPr). The two antagonistic activities of HprK/P are regulated by several intracellular metabolites, which change their concentration in response to the absence or presence of rapidly metabolisable carbon sources (glucose, fructose, etc.) in the growth medium. Therefore, by controlling the phosphorylation state of HPr, HPrK/P is a sensor enzyme that plays a major role in the regulation of carbon metabolism and sugar transport: it mediates carbon catabolite repression (CCR), and regulates PTS-catalyzed carbohydrate uptake and inducer exclusion. The chain is HPr kinase/phosphorylase from Thermoanaerobacter pseudethanolicus (strain ATCC 33223 / 39E) (Clostridium thermohydrosulfuricum).